Consider the following 359-residue polypeptide: 4'-phosphopantetheinyl transferase A (359 aa).

The protein belongs to the P-Pant transferase superfamily.

The enzyme catalyses apo-[ACP] + CoA = holo-[ACP] + adenosine 3',5'-bisphosphate + H(+). Its activity is regulated as follows. Activity is inhibited bythe antifunfal copmpounds PD 404,182, 6-nitroso-1,2-benzopyrone, and calmidazolium chloride with IC(50) values of 3.9 uM, 35.2 uM, and 19.2 uM, respectively. In terms of biological role, acyl-carrier-protein synthase that transfers the 4'-phosphopantetheine moiety from coenzyme A to a Ser of an acyl-carrier-protein. The 4'-phosphopantetheine (4'-PPT) portion of CoA provides the essential prosthetic group for a number of carrier proteins and multi-domain enzymes, priming them for the acceptance of acyl building blocks in fatty acid synthesis and many aspects of secondary metabolism mediated by polyketide synthases (PKSs) and non-ribosomal peptide synthetases (NRPSs). PptA is able to transfer the cofactor to a broad range of enzymes with acyl- or peptidyl-carrier protein domains and activates target enzymes involved in the synthesis of lysine, but also secondary metabolites including gliotoxin, fumigaclavine C, fumiquinazole A, fumiquinazoline C, pyripyroprene A, fumagillin, the siderophores triacetylfusarinine C (TAFC) and ferricrocin (FC), and dihydroxy naphthalene (DHN)-melanin. Plays an essential role in virulence. The protein is 4'-phosphopantetheinyl transferase A of Aspergillus fumigatus (strain ATCC MYA-4609 / CBS 101355 / FGSC A1100 / Af293) (Neosartorya fumigata).